The sequence spans 361 residues: Biotin synthase (361 aa).

The Radical SAM core domain maps to 47 to 278 (VHGDEVALCG…AAHIFVMGGR (232 aa)). Residues Cys65, Cys69, and Cys72 each contribute to the [4Fe-4S] cluster site. Positions 110, 143, and 203 each coordinate [2Fe-2S] cluster. Positions 323 to 361 (TLRPPDTGKPWAFDGHAPSDADWNRKAAEPRPRPLPVVR) are disordered. The span at 339 to 354 (APSDADWNRKAAEPRP) shows a compositional bias: basic and acidic residues.

The protein belongs to the radical SAM superfamily. Biotin synthase family. As to quaternary structure, homodimer. The cofactor is [4Fe-4S] cluster. It depends on [2Fe-2S] cluster as a cofactor.

The catalysed reaction is (4R,5S)-dethiobiotin + (sulfur carrier)-SH + 2 reduced [2Fe-2S]-[ferredoxin] + 2 S-adenosyl-L-methionine = (sulfur carrier)-H + biotin + 2 5'-deoxyadenosine + 2 L-methionine + 2 oxidized [2Fe-2S]-[ferredoxin]. The protein operates within cofactor biosynthesis; biotin biosynthesis; biotin from 7,8-diaminononanoate: step 2/2. Catalyzes the conversion of dethiobiotin (DTB) to biotin by the insertion of a sulfur atom into dethiobiotin via a radical-based mechanism. The sequence is that of Biotin synthase from Anaeromyxobacter sp. (strain K).